Reading from the N-terminus, the 369-residue chain is UDP-3-O-acylglucosamine N-acyltransferase (369 aa).

The Proton acceptor role is filled by His263.

This sequence belongs to the transferase hexapeptide repeat family. LpxD subfamily. As to quaternary structure, homotrimer.

The enzyme catalyses a UDP-3-O-[(3R)-3-hydroxyacyl]-alpha-D-glucosamine + a (3R)-hydroxyacyl-[ACP] = a UDP-2-N,3-O-bis[(3R)-3-hydroxyacyl]-alpha-D-glucosamine + holo-[ACP] + H(+). It participates in bacterial outer membrane biogenesis; LPS lipid A biosynthesis. Catalyzes the N-acylation of UDP-3-O-acylglucosamine using 3-hydroxyacyl-ACP as the acyl donor. Is involved in the biosynthesis of lipid A, a phosphorylated glycolipid that anchors the lipopolysaccharide to the outer membrane of the cell. The sequence is that of UDP-3-O-acylglucosamine N-acyltransferase from Burkholderia ambifaria (strain MC40-6).